A 310-amino-acid chain; its full sequence is Malate dehydrogenase (310 aa).

Residues Gly7 to Gly12 and Asp32 each bind NAD(+). Arg81 and Arg87 together coordinate substrate. Residues Asn94 and Val117–Asn119 each bind NAD(+). Residues Asn119 and Arg150 each coordinate substrate. Residue His174 is the Proton acceptor of the active site.

The protein belongs to the LDH/MDH superfamily. MDH type 3 family.

The enzyme catalyses (S)-malate + NAD(+) = oxaloacetate + NADH + H(+). Its function is as follows. Catalyzes the reversible oxidation of malate to oxaloacetate. This is Malate dehydrogenase from Chlorobium phaeobacteroides (strain BS1).